Here is a 150-residue protein sequence, read N- to C-terminus: Thyroid hormone-inducible hepatic protein (150 aa).

Residues 83 to 104 (KVAGNETSEAENDAAETEEAEE) are disordered. Serine 90 is subject to Phosphoserine. Acidic residues predominate over residues 90–104 (SEAENDAAETEEAEE).

The protein belongs to the SPOT14 family. As to quaternary structure, homodimer. Heterodimer with MID1IP1. Interacts with THRB and PLAGL1. As to expression, mainly expressed in tissues that synthesize triglycerides.

The protein resides in the nucleus. Its subcellular location is the cytoplasm. Plays a role in the regulation of lipogenesis, especially in lactating mammary gland. Important for the biosynthesis of triglycerides with medium-length fatty acid chains. May modulate lipogenesis by interacting with MID1IP1 and preventing its interaction with ACACA. May function as transcriptional coactivator. May modulate the transcription factor activity of THRB. In Mus musculus (Mouse), this protein is Thyroid hormone-inducible hepatic protein (Thrsp).